The sequence spans 1532 residues: Glycogen debranching enzyme (1532 aa).

Serine 64 is modified (phosphoserine). Catalysis depends on residues aspartate 526, histidine 529, and aspartate 627.

The protein belongs to the glycogen debranching enzyme family. Monomer. Interacts with NHLRC1/malin. Post-translationally, the N-terminus is blocked. In terms of processing, ubiquitinated. Liver, kidney and lymphoblastoid cells express predominantly isoform 1; whereas muscle and heart express not only isoform 1, but also muscle-specific isoform mRNAs (isoforms 2, 3 and 4). Isoforms 5 and 6 are present in both liver and muscle.

It localises to the cytoplasm. It catalyses the reaction Transfers a segment of a (1-&gt;4)-alpha-D-glucan to a new position in an acceptor, which may be glucose or a (1-&gt;4)-alpha-D-glucan.. The enzyme catalyses Hydrolysis of (1-&gt;6)-alpha-D-glucosidic branch linkages in glycogen phosphorylase limit dextrin.. In terms of biological role, multifunctional enzyme acting as 1,4-alpha-D-glucan:1,4-alpha-D-glucan 4-alpha-D-glycosyltransferase and amylo-1,6-glucosidase in glycogen degradation. The sequence is that of Glycogen debranching enzyme (AGL) from Homo sapiens (Human).